The primary structure comprises 396 residues: Elongation factor Tu (396 aa).

One can recognise a tr-type G domain in the interval 10–206 (KPHVNVGTIG…ALDSYIPTPE (197 aa)). The segment at 19 to 26 (GHVDHGKT) is G1. 19–26 (GHVDHGKT) is a GTP binding site. Residue Thr-26 coordinates Mg(2+). The G2 stretch occupies residues 60–64 (GITIN). Residues 81–84 (DCPG) form a G3 region. GTP-binding positions include 81–85 (DCPGH) and 136–139 (NKCD). Positions 136–139 (NKCD) are G4. Residues 174 to 176 (SAK) form a G5 region.

The protein belongs to the TRAFAC class translation factor GTPase superfamily. Classic translation factor GTPase family. EF-Tu/EF-1A subfamily. Monomer.

It localises to the cytoplasm. The enzyme catalyses GTP + H2O = GDP + phosphate + H(+). Its function is as follows. GTP hydrolase that promotes the GTP-dependent binding of aminoacyl-tRNA to the A-site of ribosomes during protein biosynthesis. The polypeptide is Elongation factor Tu (Herminiimonas arsenicoxydans).